A 227-amino-acid chain; its full sequence is N-acetyltransferase 8 (227 aa).

The Cytoplasmic portion of the chain corresponds to 1–42 (MAPCHIRKYQESDRQWVVGLLSRGMAEHAPATFRQLLKLPRT). The chain crosses the membrane as a helical; Signal-anchor for type II membrane protein span at residues 43-63 (LILLLGGPLALLLVSGSWLLA). An N-acetyltransferase domain is found at 61 to 220 (LLALVFSISL…HTVHFIYHLP (160 aa)). The Lumenal portion of the chain corresponds to 64 to 227 (LVFSISLFPA…HLPSSKVGSL (164 aa)).

The protein belongs to the NAT8 family. In terms of tissue distribution, preferentially expressed in liver and kidney. Also detected in brain (at protein level).

The protein resides in the endoplasmic reticulum-Golgi intermediate compartment membrane. It localises to the endoplasmic reticulum membrane. It catalyses the reaction L-lysyl-[protein] + acetyl-CoA = N(6)-acetyl-L-lysyl-[protein] + CoA + H(+). The catalysed reaction is an S-substituted L-cysteine + acetyl-CoA = an N-acetyl-L-cysteine-S-conjugate + CoA + H(+). Its pathway is sulfur metabolism; glutathione metabolism. In terms of biological role, endoplasmic reticulum (ER)-membrane-bound lysine N-acetyltransferase catalyzing the N6-acetylation of lysine residues in the lumen of the ER in various proteins, including PROM1 and BACE1, using acetyl-CoA as acetyl donor. Thereby, may regulate apoptosis through the acetylation and the regulation of the expression of PROM1. May also regulate amyloid beta-peptide secretion through acetylation of BACE1 and the regulation of its expression in neurons. N(6)-lysine acetylation in the ER maintains protein homeostasis and regulates reticulophagy. Alternatively, acetylates the free alpha-amino group of cysteine S-conjugates to form mercapturic acids. This is the final step in a major route for detoxification of a wide variety of reactive electrophiles which starts with their incorporation into glutathione S-conjugates. The glutathione S-conjugates are then further processed into cysteine S-conjugates and finally mercapturic acids which are water soluble and can be readily excreted in urine or bile. This Homo sapiens (Human) protein is N-acetyltransferase 8.